We begin with the raw amino-acid sequence, 427 residues long: Sensor histidine kinase ArsS (427 aa).

Helical transmembrane passes span Phe3–Phe23 and Asn131–Leu151. An HAMP domain is found at Leu151–Glu203. The region spanning Ser211–Ile398 is the Histidine kinase domain. At His214 the chain carries Phosphohistidine; by autocatalysis.

Autophosphorylated.

It is found in the membrane. It catalyses the reaction ATP + protein L-histidine = ADP + protein N-phospho-L-histidine.. Its function is as follows. Member of the two-component regulatory system ArsS/ArsR that regulates genes involved in biofilm formation and acid adaptation by acting on major ammonia-producing pathways. Functions as a sensor protein kinase which is autophosphorylated at a histidine residue and transfers its phosphate group to the conserved aspartic acid residue in the regulatory domain of ArsR. In turn, ArsR binds to the upstream promoter regions of target genes including ureA, amiE and amiF to positively regulate their expression in response to acidic pH. Also participates in acidic acclimatation in a phosphorylation-independent pathway by regulating acid-induced trafficking of urease and its accessory proteins to the inner membrane. The polypeptide is Sensor histidine kinase ArsS (Helicobacter pylori (strain ATCC 700392 / 26695) (Campylobacter pylori)).